We begin with the raw amino-acid sequence, 458 residues long: MATESPATRRVQVAEHPRLLKLKEMFNSKFGSIPKFYVRAPGRVNIIGEHIDYCGYSVLPMAVEQDVLIAVEPVKTYALQLANTNPLYPDFSTSANNIQIDKTKPLWHNYFLCGLKGIQEHFGLSNLTGMNCLVDGNIPPSSGLSSSSALVCCAGLVTLTVLGRNLSKVELAEICAKSERYIGTEGGGMDQSISFLAEEGTAKLIEFSPLRATDVKLPSGAVFVIANSCVEMNKAATSHFNIRVMECRLAAKLLAKYKSLQWDKVLRLEEVQAKLGISLEEMLLVTEDALHPEPYNPEEICRCLGISLEELRTQILSPNTQDVLIFKLYQRAKHVYSEAARVLQFKKICEEAPENMVQLLGELMNQSHMSCRDMYECSCPELDQLVDICRKFGAQGSRLTGAGWGGCTVSMVPADKLPSFLANVHKAYYQRSDGSLAPEKQSLFATKPGGGALVLLEA.

The alpha-D-galactose site is built by R43, E49, H50, and D52. G143, S145, and S146 together coordinate ATP. D190 lines the alpha-D-galactose pocket. The Proton acceptor role is filled by D190. 2 residues coordinate ATP: N233 and K234.

This sequence belongs to the GHMP kinase family. GalK subfamily. As to quaternary structure, monomer.

The enzyme catalyses N-acetyl-alpha-D-galactosamine + ATP = N-acetyl-alpha-D-galactosamine 1-phosphate + ADP + H(+). Acts on GalNAc. Also acts as a galactokinase when galactose is present at high concentrations. May be involved in a salvage pathway for the reutilization of free GalNAc derived from the degradation of complex carbohydrates. The chain is N-acetylgalactosamine kinase (GALK2) from Homo sapiens (Human).